A 96-amino-acid polypeptide reads, in one-letter code: SAGA complex subunit SUS1 (96 aa).

K68 participates in a covalent cross-link: Glycyl lysine isopeptide (Lys-Gly) (interchain with G-Cter in ubiquitin).

It belongs to the ENY2 family. Component of the 1.8 MDa SAGA (Spt-Ada-Gcn5 acetyltransferase) complex, which is composed of 19 subunits TRA1, SPT7, TAF5, NGG1/ADA3, SGF73, SPT20/ADA5, SPT8, TAF12, TAF6, HFI1/ADA1, UBP8, GCN5, ADA2, SPT3, SGF29, TAF10, TAF9, SGF11 and SUS1. The SAGA complex is composed of 4 modules, namely the HAT (histone acetyltransferase) module (GCN5, ADA2, NGG1/ADA3 and SGF29), the DUB (deubiquitinating) module (UBP8, SGF11, SGF73 and SUS1), the core or TAF (TBP-associated factor) module (TAF5, TAF6, TAF9, TAF10 and TAF12), and the Tra1 or SPT (Suppressor of Ty) module (TRA1, HFI1/ADA1, SPT3, SPT7, SPT8 and SPT20/ADA5). The Tra1/SPT module binds activators, the core module recruits TBP (TATA-binding protein), the HAT module contains the histone H3 acetyltransferase GCN5, and the DUB module comprises the histone H2B deubiquitinase UBP8. Also identified in an altered form of SAGA, named SALSA (SAGA altered, Spt8 absent) or SLIK (SAGA-like) complex, which contains a C-terminal truncated form of SPT7 and is missing SPT8. However, it has been shown that the SAGA and SAGA-like SALSA/SLIK transcriptional coactivators are structurally and biochemically equivalent. Component of the nuclear pore complex (NPC)-associated TREX-2 complex (transcription and export complex 2), composed of at least SUS1, SAC3, THP1, SEM1, and CDC31. TREX-2 contains 2 SUS1 chains. The TREX-2 complex interacts with the mRNA export factors MEX67, MTR2 and SUB2, and the nucleoporin NUP1. Interacts directly with THP1, SAC3. Interacts directly with SGF11 and UBP8. Interacts with YRA1, MEX67 and with the RNA polymerase II.

It localises to the nucleus. Its subcellular location is the nucleoplasm. The protein resides in the cytoplasm. It is found in the P-body. Involved in mRNA export coupled transcription activation by association with both the TREX-2 and the SAGA complexes. SAGA acts as a general cofactor required for essentially all RNA polymerase II transcription. At the promoters, SAGA is required for transcription pre-initiation complex (PIC) recruitment. It influences RNA polymerase II transcriptional activity through different activities such as TBP interaction (via core/TAF module) and promoter selectivity, interaction with transcription activators (via Tra1/SPT module), and chromatin modification through histone acetylation (via HAT module) and deubiquitination (via DUB module). SAGA preferentially acetylates histones H3 (to form H3K9ac, H3K14ac, H3K18ac and H3K23ac) and H2B and deubiquitinates histone H2B. SAGA interacts with DNA via upstream activating sequences (UASs). Also identified in a modified version of SAGA named SALSA or SLIK. The cleavage of SPT7 and the absence of the SPT8 subunit in SLIK neither drive any major conformational differences in its structure compared with SAGA, nor significantly affect HAT, DUB, or DNA-binding activities. Within the SAGA complex, participates in a subcomplex with SGF11, SGF73 and UBP8 required for deubiquitination of H2B and for the maintenance of steady-state H3 methylation levels. The TREX-2 complex functions in docking export-competent ribonucleoprotein particles (mRNPs) to the nuclear entrance of the nuclear pore complex (nuclear basket), by association with components of the nuclear mRNA export machinery (MEX67-MTR2 and SUB2) in the nucleoplasm and the nucleoporin NUP1 at the nuclear basket. TREX-2 participates in mRNA export and accurate chromatin positioning in the nucleus by tethering genes to the nuclear periphery. SUS1 also has a role in mRNP biogenesis and maintenance of genome integrity through preventing RNA-mediated genome instability. Has a role in response to DNA damage induced by methyl methane sulfonate (MMS) and replication arrest induced by hydroxyurea. May also be involved in cytoplasmic mRNA decay by interaction with components of P-bodies. The sequence is that of SAGA complex subunit SUS1 from Saccharomyces cerevisiae (strain ATCC 204508 / S288c) (Baker's yeast).